A 1076-amino-acid chain; its full sequence is Structural maintenance of chromosomes protein 5 (1076 aa).

49–56 (GHNGSGKS) serves as a coordination point for ATP. Residues 190 to 415 (STSIEDKCTT…KRDEEQNSQL (226 aa)) adopt a coiled-coil conformation. The span at 375-410 (EQKYSTAERDSRQEEDAIQKKSYEMRQLENKKRDEE) shows a compositional bias: basic and acidic residues. The tract at residues 375–420 (EQKYSTAERDSRQEEDAIQKKSYEMRQLENKKRDEEQNSQLNRQDR) is disordered. The interval 416–617 (NRQDRYRVLQ…ANTWRDQFFK (202 aa)) is flexible hinge. 2 coiled-coil regions span residues 627–713 (NSIL…EKKA) and 749–786 (KSRVNKSNSEAETHRSKLEDLKSVKDAAEDLLKTALNH).

Belongs to the SMC family. SMC5 subfamily. Interacts with smc-6. Expressed in the germline (at protein level).

Its subcellular location is the nucleus. The protein localises to the chromosome. Core component of the smc-5/smc-6 complex. Functions in DNA double strand break repair by promoting sister-chromatid homologous recombination during meiosis. Acts in a DNA repair pathway for removal of ionizing radiation- and ultraviolet (UV) radiation-induced DNA lesions that is distinct from classical nucleotide excision repair and the translesion synthesis pathway. Also involved in the recovery of stalled replication forks. The polypeptide is Structural maintenance of chromosomes protein 5 (Caenorhabditis elegans).